A 218-amino-acid polypeptide reads, in one-letter code: Large ribosomal subunit protein eL13 (218 aa).

The interval 196-218 (AKRAKEAAESEDAAKGDPKKAKK) is disordered. Over residues 199–218 (AKEAAESEDAAKGDPKKAKK) the composition is skewed to basic and acidic residues.

It belongs to the eukaryotic ribosomal protein eL13 family. In terms of assembly, component of the 60S large ribosomal subunit (LSU).

The protein localises to the cytoplasm. In terms of biological role, component of the ribosome, a large ribonucleoprotein complex responsible for the synthesis of proteins in the cell. The small ribosomal subunit (SSU) binds messenger RNAs (mRNAs) and translates the encoded message by selecting cognate aminoacyl-transfer RNA (tRNA) molecules. The large subunit (LSU) contains the ribosomal catalytic site termed the peptidyl transferase center (PTC), which catalyzes the formation of peptide bonds, thereby polymerizing the amino acids delivered by tRNAs into a polypeptide chain. The nascent polypeptides leave the ribosome through a tunnel in the LSU and interact with protein factors that function in enzymatic processing, targeting, and the membrane insertion of nascent chains at the exit of the ribosomal tunnel. As part of the LSU, it is probably required for its formation and the maturation of rRNAs. The polypeptide is Large ribosomal subunit protein eL13 (RpL13) (Drosophila melanogaster (Fruit fly)).